Here is a 398-residue protein sequence, read N- to C-terminus: Acetate kinase (398 aa).

N8 serves as a coordination point for Mg(2+). K15 is a binding site for ATP. A substrate-binding site is contributed by R90. The active-site Proton donor/acceptor is D147. Residues 207–211, 282–284, and 330–334 contribute to the ATP site; these read HIGAG, DMR, and GVGEN. E383 is a binding site for Mg(2+).

Belongs to the acetokinase family. Homodimer. Mg(2+) is required as a cofactor. It depends on Mn(2+) as a cofactor.

It localises to the cytoplasm. It carries out the reaction acetate + ATP = acetyl phosphate + ADP. It participates in metabolic intermediate biosynthesis; acetyl-CoA biosynthesis; acetyl-CoA from acetate: step 1/2. Functionally, catalyzes the formation of acetyl phosphate from acetate and ATP. Can also catalyze the reverse reaction. The polypeptide is Acetate kinase (Limosilactobacillus fermentum (strain NBRC 3956 / LMG 18251) (Lactobacillus fermentum)).